A 93-amino-acid chain; its full sequence is DNA/RNA-binding protein Alba (93 aa).

The residue at position 11 (Lys11) is an N6-acetyllysine.

The protein belongs to the histone-like Alba family. In terms of processing, acetylated. Acetylation at Lys-11 decreases DNA-binding affinity.

It localises to the cytoplasm. The protein resides in the chromosome. Its function is as follows. Binds double-stranded DNA tightly but without sequence specificity. Involved in DNA compaction. In Pyrococcus horikoshii (strain ATCC 700860 / DSM 12428 / JCM 9974 / NBRC 100139 / OT-3), this protein is DNA/RNA-binding protein Alba.